A 386-amino-acid polypeptide reads, in one-letter code: Cytotoxic granule associated RNA binding protein TIA1 (386 aa).

Methionine 1 bears the N-acetylmethionine mark. 3 RRM domains span residues lysine 7–threonine 83, phenylalanine 106–arginine 184, and cysteine 214–glutamate 286. A disordered region spans residues glycine 355–alanine 376.

In terms of assembly, homooligomer; homooligomerization is induced by Zn(2+). Interacts with FASTK; the interactions leads to its phosphorylation. Interacts (via RRM1 and the C-terminal glutamine-rich (Q) sequence) with SNRPC/U1-C (via N-terminus); thereby facilitating spliceosomal U1 snRNP recruitment to 5' splice sites. In terms of processing, phosphorylatedby FASTK; phosphorylation occurs after FAS ligation in FAS-mediated apoptosis and before DNA fragmentation.

The protein resides in the nucleus. The protein localises to the cytoplasm. It localises to the stress granule. Its function is as follows. RNA-binding protein involved in the regulation of alternative pre-RNA splicing and mRNA translation by binding to uridine-rich (U-rich) RNA sequences. Binds to U-rich sequences immediately downstream from a 5' splice sites in a uridine-rich small nuclear ribonucleoprotein (U snRNP)-dependent fashion, thereby modulating alternative pre-RNA splicing. Preferably binds to the U-rich IAS1 sequence in a U1 snRNP-dependent manner; this binding is optimal if a 5' splice site is adjacent to IAS1. Activates the use of heterologous 5' splice sites; the activation depends on the intron sequence downstream from the 5' splice site, with a preference for a downstream U-rich sequence. By interacting with SNRPC/U1-C, promotes recruitment and binding of spliceosomal U1 snRNP to 5' splice sites followed by U-rich sequences, thereby facilitating atypical 5' splice site recognition by U1 snRNP. Activates splicing of alternative exons with weak 5' splice sites followed by a U-rich stretch on its own pre-mRNA and on TIAR mRNA. Acts as a modulator of alternative splicing for the apoptotic FAS receptor, thereby promoting apoptosis. Binds to the 5' splice site region of FAS intron 5 to promote accumulation of transcripts that include exon 6 at the expense of transcripts in which exon 6 is skipped, thereby leading to the transcription of a membrane-bound apoptotic FAS receptor, which promotes apoptosis. Binds to a conserved AU-rich cis element in COL2A1 intron 2 and modulates alternative splicing of COL2A1 exon 2. Also binds to the equivalent AT-rich element in COL2A1 genomic DNA, and may thereby be involved in the regulation of transcription. Involved in the repression of mRNA translation by binding to AU-rich elements (AREs) located in mRNA 3' untranslated regions (3' UTRs), including target ARE-bearing mRNAs encoding TNF and PTGS2. Also participates in the cellular response to environmental stress, by acting downstream of the stress-induced phosphorylation of EIF2S1/EIF2A to promote the recruitment of untranslated mRNAs to cytoplasmic stress granules (SGs), leading to stress-induced translational arrest. Formation and recruitment to SGs is regulated by Zn(2+). Possesses nucleolytic activity against cytotoxic lymphocyte target cells. The chain is Cytotoxic granule associated RNA binding protein TIA1 (Tia1) from Mus musculus (Mouse).